Reading from the N-terminus, the 460-residue chain is Bifunctional protein GlmU (460 aa).

The pyrophosphorylase stretch occupies residues M1–R232. UDP-N-acetyl-alpha-D-glucosamine-binding positions include L8–G11, K22, Q73, G78–T79, Y100–D102, G137, E157, N172, and N230. D102 serves as a coordination point for Mg(2+). N230 contacts Mg(2+). The interval V233–A253 is linker. The interval G254–K460 is N-acetyltransferase. Residues R336 and K354 each coordinate UDP-N-acetyl-alpha-D-glucosamine. H366 (proton acceptor) is an active-site residue. The UDP-N-acetyl-alpha-D-glucosamine site is built by Y369 and N380. Acetyl-CoA contacts are provided by residues A383, N389 to Y390, S408, A426, and R443.

It in the N-terminal section; belongs to the N-acetylglucosamine-1-phosphate uridyltransferase family. This sequence in the C-terminal section; belongs to the transferase hexapeptide repeat family. In terms of assembly, homotrimer. The cofactor is Mg(2+).

The protein localises to the cytoplasm. The enzyme catalyses alpha-D-glucosamine 1-phosphate + acetyl-CoA = N-acetyl-alpha-D-glucosamine 1-phosphate + CoA + H(+). It catalyses the reaction N-acetyl-alpha-D-glucosamine 1-phosphate + UTP + H(+) = UDP-N-acetyl-alpha-D-glucosamine + diphosphate. It participates in nucleotide-sugar biosynthesis; UDP-N-acetyl-alpha-D-glucosamine biosynthesis; N-acetyl-alpha-D-glucosamine 1-phosphate from alpha-D-glucosamine 6-phosphate (route II): step 2/2. Its pathway is nucleotide-sugar biosynthesis; UDP-N-acetyl-alpha-D-glucosamine biosynthesis; UDP-N-acetyl-alpha-D-glucosamine from N-acetyl-alpha-D-glucosamine 1-phosphate: step 1/1. The protein operates within bacterial outer membrane biogenesis; LPS lipid A biosynthesis. In terms of biological role, catalyzes the last two sequential reactions in the de novo biosynthetic pathway for UDP-N-acetylglucosamine (UDP-GlcNAc). The C-terminal domain catalyzes the transfer of acetyl group from acetyl coenzyme A to glucosamine-1-phosphate (GlcN-1-P) to produce N-acetylglucosamine-1-phosphate (GlcNAc-1-P), which is converted into UDP-GlcNAc by the transfer of uridine 5-monophosphate (from uridine 5-triphosphate), a reaction catalyzed by the N-terminal domain. This Shewanella baltica (strain OS155 / ATCC BAA-1091) protein is Bifunctional protein GlmU.